Consider the following 1369-residue polypeptide: MRPPGFLSRAPSLNRAERGIWSCSMDQREPLPPAPAENEMKYDTNNNEEEEGEQFDFDSGDEIPEADRQAPSAPETGGAGASEAPAPTGGEDGAGAETTPVAEPTKLVLPMKVNPYSVIDITPFQEDQPPTPVPSAEEENVGLHVPCGYLVPVPCGYAVPSNLPLLLPAYSSPVIICATSLDEEAETPEVTEDRQPNSLSSEEPPTSEDQVGREDSALARWAADPANTAWMENPEEAIYDDVPRENSDSEPDEMIYDDVENGDEGGNSSLEYGWSSSEFESYEEQSDSECKNGIPRSFLRSNHKKQLSHDLTRLKEHYEKKMRDLMASTVGVVEIQQLRQKHELKMQKLVKAAKDGTKDGLERTRAAVKRGRSFIRTKSLIAQDHRSSLEEEQNLFIDVDCKHPEAILTPMPEGLSQQQVVRRYILGSVVDSEKNYVDALKRILEQYEKPLSEMEPKVLSERKLKTVFYRVKEILQCHSLFQIALASRVSEWDSVEMIGDVFVASFSKSMVLDAYSEYVNNFSTAVAVLKKTCATKPAFLEFLKQEQEASPDRTTLYSLMMKPIQRFPQFILLLQDMLKNTSKGHPDRLPLQMALTELETLAEKLNERKRDADQRCEVKQIAKAINERYLNKLLSSGSRYLIRSDDMIETVYNDRGEIVKTKERRVFMLNDVLMCATVSSRPSHDSRVMSSQRYLLKWSVPLGHVDAIEYGSSAGTGEHSRHLAVHPPESLAVVANAKPNKVYMGPGQLYQDLQNLLHDLNVIGQITQLIGNLKGNYQNLNQSVAHDWTSGLQRLILKKEDEIRAADCCRIQLQLPGKQDKSGRPTFFTAVFNTFTPAIKESWVNSLQMAKLALEEENHMGWFCVEDDGNHIKKEKHPLLVGHMPVMVAKQQEFKIECAAYNPEPYLNNESQPDSFSTAHGFLWIGSCTHQMGQIAIVSFQNSTPKVIECFNVESRILCMLYVPVEEKRREPGAPPDPETPAVRASDVPTICVGTEEGSISIYKSSQGSKKVRLQHFFTPEKSTVMSLACTSQSLYAGLVNGAVASYARAPDGSWDSEPQKVIKLGVLPVRSLLMMEDTLWAASGGQVFIISVETHAVEGQLEAHQEEGMVISHMAVSGVGIWIAFTSGSTLRLFHTETLKHLQDINIATPVHNMLPGHQRLSVTSLLVCHGLLMVGTSLGVLVALPVPRLQGIPKVTGRGMVSYHAHNSPVKFIVLATALHEKDKDKSRDSLAPGPEPQDEDQKDALPSGGAGSSLSQGDPDAAIWLGDSLGSMTQKSDLSSSSGSLSLSHGSSSLEHRSEDSTIYDLLKDPVSLRSKARRAKKAKASSALVVCGGQGHRRVHRKARQPHQEELAPTVMVWQIPLLNI.

The segment at 1–106 (MRPPGFLSRA…ETTPVAEPTK (106 aa)) is disordered. The segment covering 46–64 (NNEEEEGEQFDFDSGDEIP) has biased composition (acidic residues). Residues 83 to 100 (EAPAPTGGEDGAGAETTP) show a composition bias toward low complexity. Ser180 carries the phosphoserine modification. Residues 184-254 (EAETPEVTED…ENSDSEPDEM (71 aa)) form a disordered region. Residues 196–209 (PNSLSSEEPPTSED) are compositionally biased toward polar residues. Residues 304–355 (KKQLSHDLTRLKEHYEKKMRDLMASTVGVVEIQQLRQKHELKMQKLVKAAKD) adopt a coiled-coil conformation. The residue at position 379 (Ser379) is a Phosphoserine. The region spanning 421 to 608 (VRRYILGSVV…ETLAEKLNER (188 aa)) is the DH domain. Disordered regions lie at residues 1226–1260 (KDKS…LSQG) and 1277–1297 (QKSD…SSSL). Positions 1279–1296 (SDLSSSSGSLSLSHGSSS) are enriched in low complexity. The residue at position 1287 (Ser1287) is a Phosphoserine. Gln1338 carries the post-translational modification N5-methylglutamine.

Post-translationally, methylated at Gln-1338 by N6AMT1.

In terms of biological role, may play a role in developmental myelination of peripheral nerves. This is Rho guanine nucleotide exchange factor 10 (ARHGEF10) from Homo sapiens (Human).